The following is a 435-amino-acid chain: uncharacterized protein (435 aa).

WD repeat units lie at residues 105-149 (DLEY…GIDS), 164-204 (HNNA…SKTQ), and 207-247 (AHDK…HSTI). Position 266 is a phosphoserine (Ser-266). The stretch at 313 to 353 (GHKGDVNAVKWMPGSKSKLATCGDDCVVSLWDLDQPVNPSP) is one WD 4 repeat. The segment at 352–371 (SPAPTLSVSGTTPGMTGSTS) is disordered. Residues 358–371 (SVSGTTPGMTGSTS) are compositionally biased toward low complexity. Ser-388 carries the phosphoserine modification.

The protein localises to the cytoplasm. It localises to the golgi apparatus. This is an uncharacterized protein from Schizosaccharomyces pombe (strain 972 / ATCC 24843) (Fission yeast).